The chain runs to 324 residues: Thiamine thiazole synthase (324 aa).

Substrate is bound by residues Cys-86, Glu-107–Ala-108, Gly-115, and Val-180. Residue Cys-213 is modified to 2,3-didehydroalanine (Cys). Substrate contacts are provided by residues Asp-215, His-230, Met-282, and Arg-292 to Gly-294.

The protein belongs to the THI4 family. As to quaternary structure, homooctamer. Fe cation is required as a cofactor. Post-translationally, during the catalytic reaction, a sulfide is transferred from Cys-213 to a reaction intermediate, generating a dehydroalanine residue.

It is found in the cytoplasm. It localises to the nucleus. It catalyses the reaction [ADP-thiazole synthase]-L-cysteine + glycine + NAD(+) = [ADP-thiazole synthase]-dehydroalanine + ADP-5-ethyl-4-methylthiazole-2-carboxylate + nicotinamide + 3 H2O + 2 H(+). Its function is as follows. Involved in biosynthesis of the thiamine precursor thiazole. Catalyzes the conversion of NAD and glycine to adenosine diphosphate 5-(2-hydroxyethyl)-4-methylthiazole-2-carboxylic acid (ADT), an adenylated thiazole intermediate. The reaction includes an iron-dependent sulfide transfer from a conserved cysteine residue of the protein to a thiazole intermediate. The enzyme can only undergo a single turnover, which suggests it is a suicide enzyme. May have additional roles in adaptation to various stress conditions and in DNA damage tolerance. In Fusarium solani subsp. phaseoli (Nectria haematococca), this protein is Thiamine thiazole synthase (sti35).